An 83-amino-acid chain; its full sequence is Conotoxin p21a (83 aa).

Pro-24 and Pro-43 each carry 4-hydroxyproline; partial. His-83 is modified (histidine amide).

As to quaternary structure, may form a non-covalent dimer. Contains 5 disulfide bonds. In terms of tissue distribution, expressed by the venom duct.

Its subcellular location is the secreted. This chain is Conotoxin p21a, found in Conus purpurascens (Purple cone).